A 343-amino-acid chain; its full sequence is uncharacterized protein (343 aa).

The next 11 helical transmembrane spans lie at 13–33, 44–64, 71–91, 121–141, 148–168, 177–197, 203–223, 244–264, 269–289, 296–316, and 320–340; these read VILY…SMCG, LWGY…ATLD, MHPV…LFFI, ILLL…LTGL, NASL…YLIF, FLGI…GDFS, VAVT…LDTV, VGGF…ELPL, YALG…YIAI, MVGA…FIIL, and FSIM…ILYW. 2 EamA domains span residues 55 to 192 and 216 to 340; these read IFFG…YLLT and FFWS…ILYW.

Belongs to the EamA transporter family.

The protein resides in the cell membrane. This is an uncharacterized protein from Methanothermobacter thermautotrophicus (strain ATCC 29096 / DSM 1053 / JCM 10044 / NBRC 100330 / Delta H) (Methanobacterium thermoautotrophicum).